A 540-amino-acid polypeptide reads, in one-letter code: Chaperonin GroEL 4 (540 aa).

ATP-binding positions include threonine 29–proline 32, aspartate 86–threonine 90, glycine 413, asparagine 477–alanine 479, and aspartate 493.

It belongs to the chaperonin (HSP60) family. As to quaternary structure, forms a cylinder of 14 subunits composed of two heptameric rings stacked back-to-back. Interacts with the co-chaperonin GroES.

It is found in the cytoplasm. It catalyses the reaction ATP + H2O + a folded polypeptide = ADP + phosphate + an unfolded polypeptide.. Together with its co-chaperonin GroES, plays an essential role in assisting protein folding. The GroEL-GroES system forms a nano-cage that allows encapsulation of the non-native substrate proteins and provides a physical environment optimized to promote and accelerate protein folding. The polypeptide is Chaperonin GroEL 4 (Frankia casuarinae (strain DSM 45818 / CECT 9043 / HFP020203 / CcI3)).